The chain runs to 317 residues: Putative 2-hydroxyacid dehydrogenase SE_1879 (317 aa).

NAD(+) is bound by residues 155–156, 234–236, and aspartate 260; these read EI and AGR. Arginine 236 is an active-site residue. Glutamate 265 is a catalytic residue. Histidine 283 acts as the Proton donor in catalysis. 283–286 provides a ligand contact to NAD(+); it reads HIGN.

Belongs to the D-isomer specific 2-hydroxyacid dehydrogenase family.

The polypeptide is Putative 2-hydroxyacid dehydrogenase SE_1879 (Staphylococcus epidermidis (strain ATCC 12228 / FDA PCI 1200)).